Consider the following 466-residue polypeptide: Asparagine--tRNA ligase (466 aa).

Belongs to the class-II aminoacyl-tRNA synthetase family. In terms of assembly, homodimer.

Its subcellular location is the cytoplasm. It catalyses the reaction tRNA(Asn) + L-asparagine + ATP = L-asparaginyl-tRNA(Asn) + AMP + diphosphate + H(+). The sequence is that of Asparagine--tRNA ligase from Shewanella pealeana (strain ATCC 700345 / ANG-SQ1).